A 166-amino-acid polypeptide reads, in one-letter code: uncharacterized protein (166 aa).

Helical transmembrane passes span 7–27 (VLFK…SLFY), 30–50 (FLFA…YCYI), 69–89 (IETL…KSLL), and 92–112 (NSFF…LVLF).

The protein to M.jannaschii MJ0795.1 and MJ0785.1.

It is found in the cell membrane. This is an uncharacterized protein from Methanocaldococcus jannaschii (strain ATCC 43067 / DSM 2661 / JAL-1 / JCM 10045 / NBRC 100440) (Methanococcus jannaschii).